Reading from the N-terminus, the 262-residue chain is Hydroxyethylthiazole kinase (262 aa).

Position 50 (M50) interacts with substrate. ATP is bound by residues R125 and T171. G198 contacts substrate.

Belongs to the Thz kinase family. The cofactor is Mg(2+).

The catalysed reaction is 5-(2-hydroxyethyl)-4-methylthiazole + ATP = 4-methyl-5-(2-phosphooxyethyl)-thiazole + ADP + H(+). It participates in cofactor biosynthesis; thiamine diphosphate biosynthesis; 4-methyl-5-(2-phosphoethyl)-thiazole from 5-(2-hydroxyethyl)-4-methylthiazole: step 1/1. Functionally, catalyzes the phosphorylation of the hydroxyl group of 4-methyl-5-beta-hydroxyethylthiazole (THZ). In Escherichia coli O45:K1 (strain S88 / ExPEC), this protein is Hydroxyethylthiazole kinase.